The following is a 446-amino-acid chain: G patch domain-containing protein 4 (446 aa).

Met-1 bears the N-acetylmethionine mark. The residue at position 4 (Thr-4) is a Phosphothreonine. Residues 11-57 enclose the G-patch domain; sequence GMKFAEEQLLKHGWTQGKGLGRKENGITQALRVTLKQDTHGVGHDPA. A Glycyl lysine isopeptide (Lys-Gly) (interchain with G-Cter in SUMO2) cross-link involves residue Lys-46. Thr-116 is subject to Phosphothreonine. 2 disordered regions span residues 116–140 and 188–446; these read TSGG…SKSP and QDPG…KKRD. Ser-128, Ser-130, and Ser-139 each carry phosphoserine. Positions 166 to 251 form a coiled coil; it reads TMKAKLARLE…KKKRRHQEGK (86 aa). Residues 219–237 are compositionally biased toward basic and acidic residues; sequence ASERNDADEKHPEHAEQNI. The segment covering 238–248 has biased composition (basic residues); that stretch reads RKSKKKKRRHQ. Basic and acidic residues-rich tracts occupy residues 249 to 268, 297 to 328, 363 to 375, and 392 to 409; these read EGKV…KEDA, HHEE…ESRA, REAE…DGRS, and LDVR…ESRA. Composition is skewed to basic residues over residues 416-427 and 437-446; these read RGKRKRQQHPKK and KAKKKQKKRD.

The polypeptide is G patch domain-containing protein 4 (GPATCH4) (Homo sapiens (Human)).